Here is a 64-residue protein sequence, read N- to C-terminus: Delta-buthitoxin-Hj2a (64 aa).

4 disulfide bridges follow: Cys12/Cys63, Cys16/Cys36, Cys22/Cys46, and Cys26/Cys48. Arg64 bears the Arginine amide mark.

It belongs to the long (4 C-C) scorpion toxin superfamily. Sodium channel inhibitor family. Alpha subfamily. As to expression, expressed by the venom gland.

The protein localises to the secreted. Its function is as follows. This non-amidated recombinant toxin slows fast inactivation on Nav1.1/SCN1A (EC(50)=52.8 nM), Nav1.4/SN4A (EC(50)=32 nM), Nav1.5/SCN5A (EC(50)=116.7 nM), Nav1.6/SCN8A (EC(50)=46.3 nM), and Nav1.7/SCN9A (EC(50)=147.4 nM) voltage-gated sodium channels. On Nav1.1/SCN1A channel, acts as an agonist by inducing a shift in both the voltage dependence of channel inactivation (alpha-toxin activity) and activation (beta-toxin activity). This chain is Delta-buthitoxin-Hj2a, found in Hottentotta judaicus (Black scorpion).